The primary structure comprises 1112 residues: Patronin (microtubule-binding protein) homolog (1112 aa).

The 122-residue stretch at 165 to 286 folds into the Calponin-homology (CH) domain; that stretch reads IDSVDALLFW…VNAFLADLFV (122 aa). 4 disordered regions span residues 324–358, 485–504, 542–566, and 788–834; these read AARS…SRMS, EGED…QPSV, MQQQ…PSQL, and NHSE…GSGE. Composition is skewed to polar residues over residues 345–358 and 489–504; these read SHSQ…SRMS and GTQS…QPSV. Residues 542–557 are compositionally biased toward low complexity; that stretch reads MQQQMQQQQQQQAQAQ. Residues 802–816 show a composition bias toward basic and acidic residues; it reads QNDRDDLSTGRKSDD. Positions 850–914 form a coiled coil; the sequence is ALIAKTMKRK…YKRKKLEKEL (65 aa). The interval 916-965 is disordered; sequence AELSARSTGRGHSQPPFIRTKSQMSEVTESSRQNTPRMRGQSSVEQRVSV. Residues 935–951 show a composition bias toward polar residues; that stretch reads TKSQMSEVTESSRQNTP. A compositionally biased stretch (low complexity) spans 956-965; it reads QSSVEQRVSV. One can recognise a CKK domain in the interval 972 to 1109; the sequence is THKLYAKTVT…RIPHSGTPAH (138 aa).

The protein belongs to the CAMSAP1 family. In terms of assembly, interacts with dapk-1. Expressed in larval and adult epidermis, intestine and pharynx. Broadly expressed in the nervous system. Expressed in body wall muscle cells.

The protein localises to the cell projection. It localises to the axon. The protein resides in the dendrite. It is found in the cell membrane. Its subcellular location is the sarcolemma. The protein localises to the cytoplasm. It localises to the cytosol. The protein resides in the cytoskeleton. It is found in the perikaryon. Its function is as follows. Required for microtubule stability and anchorage by binding to the minus ends of microtubules. Acts redundantly with noca-1 to control circumferential microtubule assembly along the body which is necessary for larval development, viability, morphology and integrity of the epidermis. Promotes microtubule stability and polymerization in neurons. Involved in the maintenance of neurite morphology in ALM and PLM neurons. May play a role in synaptic protein localization in the PLM neuron. May act upstream of dlk-1 in neuronal regeneration. Plays a role in postembryonic epidermal tissue integrity and wound healing. The sequence is that of Patronin (microtubule-binding protein) homolog from Caenorhabditis elegans.